We begin with the raw amino-acid sequence, 331 residues long: Phospholipase A2 inhibitor (331 aa).

Positions 1-23 are cleaved as a signal peptide; the sequence is MKSSVPSLLIACLVMSLNSYTQQ. Residue Asn-35 is glycosylated (N-linked (GlcNAc...) asparagine). LRR repeat units follow at residues 78 to 101, 103 to 125, 127 to 149, 150 to 173, 175 to 197, 199 to 221, 223 to 244, and 245 to 268; these read LPNL…LFRN, PQLH…IFTN, SSLI…WFQT, LGEL…CFDK, KKLT…MFSG, DNLE…TFHW, PKLT…FFQP, and LEQL…VYKT. N-linked (GlcNAc...) asparagine glycosylation is present at Asn-125. N-linked (GlcNAc...) asparagine glycosylation is present at Asn-232. N-linked (GlcNAc...) asparagine glycosylation is present at Asn-271. The LRRCT domain occupies 279-330; that stretch reads NPWACDCRLDNLLTWVNEHNIHLYSKEEIVCASPKHFKGECATSLHKSQICP.

In terms of assembly, homotrimer.

Its subcellular location is the secreted. Functionally, inhibits the enzymatic activity of the basic phospholipase A2 (PLA2). This Gloydius brevicaudus siniticus (Chinese mamushi) protein is Phospholipase A2 inhibitor.